A 359-amino-acid chain; its full sequence is Serum paraoxonase/arylesterase 1 (359 aa).

A disulfide bridge links cysteine 42 with cysteine 353. Residue asparagine 50 is glycosylated (N-linked (GlcNAc...) asparagine). 2 residues coordinate Ca(2+): glutamate 53 and aspartate 54. The Proton acceptor role is filled by histidine 115. The Ca(2+) site is built by isoleucine 117, asparagine 168, aspartate 169, and asparagine 224. Asparagine 253 carries an N-linked (GlcNAc...) asparagine glycan. Positions 269 and 270 each coordinate Ca(2+). N-linked (GlcNAc...) asparagine glycans are attached at residues asparagine 270 and asparagine 324.

The protein belongs to the paraoxonase family. As to quaternary structure, homodimer. Interacts with CLU. It depends on Ca(2+) as a cofactor. Glycosylated. Post-translationally, the signal sequence is not cleaved. In terms of tissue distribution, plasma. Associated with HDL.

It localises to the secreted. It is found in the extracellular space. The enzyme catalyses a phenyl acetate + H2O = a phenol + acetate + H(+). It carries out the reaction An aryl dialkyl phosphate + H2O = dialkyl phosphate + an aryl alcohol.. It catalyses the reaction an N-acyl-L-homoserine lactone + H2O = an N-acyl-L-homoserine + H(+). In terms of biological role, hydrolyzes the toxic metabolites of a variety of organophosphorus insecticides. Capable of hydrolyzing a broad spectrum of organophosphate substrates and lactones, and a number of aromatic carboxylic acid esters. Mediates an enzymatic protection of low density lipoproteins against oxidative modification. In Oryctolagus cuniculus (Rabbit), this protein is Serum paraoxonase/arylesterase 1 (PON1).